The following is a 345-amino-acid chain: RING finger protein 228 (345 aa).

Positions 1 to 21 (MAAPASDSGGSQQSPSSSPGS) are enriched in low complexity. The interval 1–43 (MAAPASDSGGSQQSPSSSPGSREGAGVAAKGAPDCGDAGARDA) is disordered. An RING-type zinc finger spans residues 58–125 (CKICYNYFDA…PGAIACPVCR (68 aa)). Residues 159 to 213 (LPQDRLPPLPARLPAPAAAPPPTPAPPPPPSPAPPQPPPPPPAEDAAPGPRARPG) are disordered. Positions 163–201 (RLPPLPARLPAPAAAPPPTPAPPPPPSPAPPQPPPPPPA) are enriched in pro residues. Over residues 202–213 (EDAAPGPRARPG) the composition is skewed to low complexity. Helical transmembrane passes span 236 to 256 (VCVV…LIFV) and 290 to 310 (LSVA…ICWL). The segment at 319-345 (AGSTGGSGGGGGPRARAAAGGARRSDT) is disordered. A compositionally biased stretch (gly residues) spans 321 to 331 (STGGSGGGGGP). The span at 332–345 (RARAAAGGARRSDT) shows a compositional bias: low complexity.

The protein resides in the membrane. The chain is RING finger protein 228 from Homo sapiens (Human).